The following is a 635-amino-acid chain: Threonine--tRNA ligase (635 aa).

The TGS domain occupies 1-61; it reads MVSIRLPDGS…DRDASLAIVT (61 aa). The catalytic stretch occupies residues 242–533; it reads DHRKLGKQLD…LIEHHAGAMP (292 aa). Zn(2+) is bound by residues cysteine 333, histidine 384, and histidine 510.

The protein belongs to the class-II aminoacyl-tRNA synthetase family. In terms of assembly, homodimer. Zn(2+) is required as a cofactor.

The protein resides in the cytoplasm. The catalysed reaction is tRNA(Thr) + L-threonine + ATP = L-threonyl-tRNA(Thr) + AMP + diphosphate + H(+). Catalyzes the attachment of threonine to tRNA(Thr) in a two-step reaction: L-threonine is first activated by ATP to form Thr-AMP and then transferred to the acceptor end of tRNA(Thr). Also edits incorrectly charged L-seryl-tRNA(Thr). The sequence is that of Threonine--tRNA ligase from Burkholderia lata (strain ATCC 17760 / DSM 23089 / LMG 22485 / NCIMB 9086 / R18194 / 383).